Here is a 56-residue protein sequence, read N- to C-terminus: uncharacterized protein (56 aa).

4Fe-4S ferredoxin-type domains lie at 2–28 and 29–56; these read VKIDYKKCGYCGACVGVCEKLAINLIE and HIIVIDEKKCNNCKLCTIVCPLNALEGE. Residues cysteine 9, cysteine 12, cysteine 15, cysteine 19, cysteine 38, cysteine 41, cysteine 44, and cysteine 48 each coordinate [4Fe-4S] cluster.

[4Fe-4S] cluster serves as cofactor.

In terms of biological role, ferredoxins are iron-sulfur proteins that transfer electrons in a wide variety of metabolic reactions. This is an uncharacterized protein from Methanocaldococcus jannaschii (strain ATCC 43067 / DSM 2661 / JAL-1 / JCM 10045 / NBRC 100440) (Methanococcus jannaschii).